A 265-amino-acid chain; its full sequence is Protein Rv2993c (265 aa).

E114, E116, and D145 together coordinate a divalent metal cation.

This sequence in the C-terminal section; belongs to the FAH family. A divalent metal cation is required as a cofactor.

The sequence is that of Protein Rv2993c from Mycobacterium tuberculosis (strain ATCC 25618 / H37Rv).